A 350-amino-acid polypeptide reads, in one-letter code: Leucine-rich repeat-containing protein 58 (350 aa).

LRR repeat units follow at residues 14–34 (NLTHLGLENLNLELVSENKRK), 35–56 (DVQQILLPHNRLVVLPPLVASF), 58–80 (HLHLLDISNNNMVYIGEEILGLT), 81–102 (KLKTLLAKNNRLDEFSFPKEMG), 105–125 (RLEVLNLSGNRFEEIPDQFLQ), 128–149 (TLKSLSLGGNRLKSIPAEIENL), 151–173 (SLEFLYLGGNFISSIPSELANLP), 174–195 (YLSYLVLCDNRIQSIPPQLAQV), 197–218 (SLRSLSLHNNLLTYLPREILSL), and 220–240 (HLHELSLRGNPLVVRFVRDLT).

The sequence is that of Leucine-rich repeat-containing protein 58 (lrrc58) from Xenopus laevis (African clawed frog).